The following is a 592-amino-acid chain: N-acetyltransferase ESCO2 (592 aa).

A phosphoserine mark is found at Ser-41 and Ser-85. Residues 267–294 are disordered; that stretch reads KSSVKVQNARSKNEEKLRKNPSGAVVSS. Phosphoserine is present on Ser-309. Residues 384-408 form a CCHH-type zinc finger; the sequence is TVCKSCGMIYTASNPEDEIQHLQHH.

This sequence belongs to the acetyltransferase family. ECO subfamily.

It localises to the nucleus. Its subcellular location is the chromosome. The enzyme catalyses L-lysyl-[protein] + acetyl-CoA = N(6)-acetyl-L-lysyl-[protein] + CoA + H(+). Acetyltransferase required for the establishment of sister chromatid cohesion. Couples the processes of cohesion and DNA replication to ensure that only sister chromatids become paired together. In contrast to the structural cohesins, the deposition and establishment factors are required only during the S phase. Acetylates the cohesin component SMC3. The protein is N-acetyltransferase ESCO2 (Esco2) of Mus musculus (Mouse).